The primary structure comprises 376 residues: 1-acyl-sn-glycerol-3-phosphate acyltransferase 3 (376 aa).

2 helical membrane passes run 14 to 34 (VLFLISGLIVNIIQLVFFIIV) and 49 to 69 (VAELLWLQLIWLFDWWACIKI). Positions 92-97 (HRSDID) match the HXXXXD motif motif. 3 helical membrane-spanning segments follow: residues 98 to 118 (WLIGWVMAQRVGCLGSSLAIM), 306 to 326 (LIVVIIWLGFLVFGGFKLLQW), and 335 to 355 (IILLFVFFLVIATITMQILIQ).

The protein belongs to the 1-acyl-sn-glycerol-3-phosphate acyltransferase family. In terms of tissue distribution, predominantly expressed in pollen.

The protein localises to the membrane. The enzyme catalyses a 1-acyl-sn-glycero-3-phosphate + an acyl-CoA = a 1,2-diacyl-sn-glycero-3-phosphate + CoA. The protein operates within phospholipid metabolism; CDP-diacylglycerol biosynthesis; CDP-diacylglycerol from sn-glycerol 3-phosphate: step 2/3. Converts lysophosphatidic acid (LPA) into phosphatidic acid by incorporating acyl moiety at the 2 position. Has preference for C-18-CoA substrates compared to C-16-CoA substrates. The protein is 1-acyl-sn-glycerol-3-phosphate acyltransferase 3 (LPAT3) of Arabidopsis thaliana (Mouse-ear cress).